The primary structure comprises 91 residues: Small ribosomal subunit protein bS20 (91 aa).

Residues 1–21 are compositionally biased toward basic and acidic residues; it reads MPLHKSAEKRLRQSARRNERN. 2 disordered regions span residues 1–25 and 71–91; these read MPLHKSAEKRLRQSARRNERNRARK and NKASRKKSQLSRMLNAYAQKD.

The protein belongs to the bacterial ribosomal protein bS20 family.

Its function is as follows. Binds directly to 16S ribosomal RNA. This Prosthecochloris aestuarii (strain DSM 271 / SK 413) protein is Small ribosomal subunit protein bS20.